A 415-amino-acid chain; its full sequence is Serine hydroxymethyltransferase 1 (415 aa).

(6S)-5,6,7,8-tetrahydrofolate is bound by residues leucine 122 and 126–128 (GHL). Lysine 230 carries the post-translational modification N6-(pyridoxal phosphate)lysine.

It belongs to the SHMT family. As to quaternary structure, homodimer. Requires pyridoxal 5'-phosphate as cofactor.

It is found in the cytoplasm. It catalyses the reaction (6R)-5,10-methylene-5,6,7,8-tetrahydrofolate + glycine + H2O = (6S)-5,6,7,8-tetrahydrofolate + L-serine. The protein operates within one-carbon metabolism; tetrahydrofolate interconversion. Its pathway is amino-acid biosynthesis; glycine biosynthesis; glycine from L-serine: step 1/1. Its function is as follows. Catalyzes the reversible interconversion of serine and glycine with tetrahydrofolate (THF) serving as the one-carbon carrier. This reaction serves as the major source of one-carbon groups required for the biosynthesis of purines, thymidylate, methionine, and other important biomolecules. Also exhibits THF-independent aldolase activity toward beta-hydroxyamino acids, producing glycine and aldehydes, via a retro-aldol mechanism. This chain is Serine hydroxymethyltransferase 1, found in Cupriavidus pinatubonensis (strain JMP 134 / LMG 1197) (Cupriavidus necator (strain JMP 134)).